A 355-amino-acid polypeptide reads, in one-letter code: Uroporphyrinogen decarboxylase (355 aa).

Substrate contacts are provided by residues 27–31 (RQAGR), Phe46, Asp77, Tyr154, Thr209, and His328.

It belongs to the uroporphyrinogen decarboxylase family. Homodimer.

Its subcellular location is the cytoplasm. The catalysed reaction is uroporphyrinogen III + 4 H(+) = coproporphyrinogen III + 4 CO2. It functions in the pathway porphyrin-containing compound metabolism; protoporphyrin-IX biosynthesis; coproporphyrinogen-III from 5-aminolevulinate: step 4/4. Functionally, catalyzes the decarboxylation of four acetate groups of uroporphyrinogen-III to yield coproporphyrinogen-III. In Vibrio vulnificus (strain CMCP6), this protein is Uroporphyrinogen decarboxylase.